The sequence spans 141 residues: Transcriptional regulator MraZ (141 aa).

SpoVT-AbrB domains are found at residues 5–47 and 75–118; these read EYNH…PNEE and AADC…SKER.

The protein belongs to the MraZ family. In terms of assembly, forms oligomers.

Its subcellular location is the cytoplasm. It is found in the nucleoid. The protein is Transcriptional regulator MraZ of Lachnoclostridium phytofermentans (strain ATCC 700394 / DSM 18823 / ISDg) (Clostridium phytofermentans).